We begin with the raw amino-acid sequence, 1632 residues long: uncharacterized protein (1632 aa).

Positions Met1–Asn15 are enriched in polar residues. The tract at residues Met1–Glu23 is disordered. The Cytoplasmic portion of the chain corresponds to Met1 to Arg63. A helical transmembrane segment spans residues Val64 to Met86. Topologically, residues Thr87–Glu1632 are extracellular. Residues Asn149 and Asn274 are each glycosylated (N-linked (GlcNAc...) asparagine; by host). The disordered stretch occupies residues Glu516 to Gly538. 3 N-linked (GlcNAc...) asparagine; by host glycosylation sites follow: Asn654, Asn719, and Asn797. Positions Ile838–Asp890 are disordered. 2 stretches are compositionally biased toward basic and acidic residues: residues Lys842–Gly853 and Gly875–Asp890. Residues Asn1012, Asn1031, Asn1261, Asn1339, Asn1511, and Asn1546 are each glycosylated (N-linked (GlcNAc...) asparagine; by host). Residues Pro1603–Glu1632 form a disordered region. The segment covering Asp1607–Glu1632 has biased composition (acidic residues).

The protein resides in the host membrane. This is an uncharacterized protein from Ostreid herpesvirus 1 (isolate France) (OsHV-1).